The primary structure comprises 127 residues: Ribonuclease VapC6 (127 aa).

In terms of domain architecture, PINc spans 26 to 120 (EPQRAEFCRS…ERHLPDIRVR (95 aa)). Asp-86 is a binding site for Mg(2+).

Belongs to the PINc/VapC protein family. Mg(2+) is required as a cofactor.

Toxic component of a type II toxin-antitoxin (TA) system. An RNase. The cognate antitoxin is VapB6. This Mycobacterium tuberculosis (strain CDC 1551 / Oshkosh) protein is Ribonuclease VapC6.